The following is a 105-amino-acid chain: Met repressor (105 aa).

Belongs to the MetJ family. In terms of assembly, homodimer.

Its subcellular location is the cytoplasm. Its function is as follows. This regulatory protein, when combined with SAM (S-adenosylmethionine) represses the expression of the methionine regulon and of enzymes involved in SAM synthesis. This chain is Met repressor, found in Haemophilus influenzae (strain PittEE).